A 505-amino-acid chain; its full sequence is N-succinylglutamate 5-semialdehyde dehydrogenase (505 aa).

234 to 239 provides a ligand contact to NAD(+); the sequence is GSAHTG. Catalysis depends on residues glutamate 257 and cysteine 291.

It belongs to the aldehyde dehydrogenase family. AstD subfamily.

It catalyses the reaction N-succinyl-L-glutamate 5-semialdehyde + NAD(+) + H2O = N-succinyl-L-glutamate + NADH + 2 H(+). It participates in amino-acid degradation; L-arginine degradation via AST pathway; L-glutamate and succinate from L-arginine: step 4/5. Functionally, catalyzes the NAD-dependent reduction of succinylglutamate semialdehyde into succinylglutamate. This is N-succinylglutamate 5-semialdehyde dehydrogenase from Yersinia pseudotuberculosis serotype IB (strain PB1/+).